A 224-amino-acid polypeptide reads, in one-letter code: Glutathione S-transferase D7 (224 aa).

The GST N-terminal domain occupies 2 to 83 (PNLDLYNFPM…YLVEKYGKPD (82 aa)). Residues 53-55 (HTI) and 67-69 (ESR) each bind glutathione. Residues 90–210 (DPQKRALINQ…LESLQQGKKF (121 aa)) enclose the GST C-terminal domain.

Belongs to the GST superfamily. Delta family. As to quaternary structure, homodimer.

It carries out the reaction RX + glutathione = an S-substituted glutathione + a halide anion + H(+). Functionally, conjugation of reduced glutathione to a wide number of exogenous and endogenous hydrophobic electrophiles. May be involved in detoxification. The sequence is that of Glutathione S-transferase D7 from Drosophila melanogaster (Fruit fly).